Reading from the N-terminus, the 162-residue chain is Ribosome maturation factor RimP (162 aa).

Belongs to the RimP family.

It is found in the cytoplasm. In terms of biological role, required for maturation of 30S ribosomal subunits. This is Ribosome maturation factor RimP from Cupriavidus pinatubonensis (strain JMP 134 / LMG 1197) (Cupriavidus necator (strain JMP 134)).